The primary structure comprises 537 residues: Phosphoenolpyruvate carboxykinase (ATP) (537 aa).

Positions 61, 195, and 201 each coordinate substrate. ATP contacts are provided by residues Lys201, His220, and 236–244 (GLSGTGKTT). Residues Lys201 and His220 each contribute to the Mn(2+) site. Asp257 lines the Mn(2+) pocket. Glu285, Arg323, and Thr448 together coordinate ATP. Arg323 contributes to the substrate binding site.

The protein belongs to the phosphoenolpyruvate carboxykinase (ATP) family. Mn(2+) is required as a cofactor.

Its subcellular location is the cytoplasm. The enzyme catalyses oxaloacetate + ATP = phosphoenolpyruvate + ADP + CO2. It participates in carbohydrate biosynthesis; gluconeogenesis. In terms of biological role, involved in the gluconeogenesis. Catalyzes the conversion of oxaloacetate (OAA) to phosphoenolpyruvate (PEP) through direct phosphoryl transfer between the nucleoside triphosphate and OAA. This Azorhizobium caulinodans (strain ATCC 43989 / DSM 5975 / JCM 20966 / LMG 6465 / NBRC 14845 / NCIMB 13405 / ORS 571) protein is Phosphoenolpyruvate carboxykinase (ATP).